Consider the following 911-residue polypeptide: DNA mismatch repair protein MutS (911 aa).

Residues Met1 to Pro95 form a disordered region. The span at Lys23–Gln42 shows a compositional bias: basic and acidic residues. Gly727–Ser734 is an ATP binding site.

Belongs to the DNA mismatch repair MutS family.

Its function is as follows. This protein is involved in the repair of mismatches in DNA. It is possible that it carries out the mismatch recognition step. This protein has a weak ATPase activity. This Synechococcus sp. (strain CC9311) protein is DNA mismatch repair protein MutS.